The chain runs to 173 residues: T-complex protein 1 subunit alpha (173 aa).

It belongs to the TCP-1 chaperonin family. Component of the chaperonin-containing T-complex (TRiC), a heterooligomeric complex of about 850 to 900 kDa that forms two stacked rings, 12 to 16 nm in diameter.

Its subcellular location is the cytoplasm. The protein localises to the cytosol. Its function is as follows. Component of the chaperonin-containing T-complex (TRiC), a molecular chaperone complex that assists the folding of proteins upon ATP hydrolysis. This is T-complex protein 1 subunit alpha from Ambystoma mexicanum (Axolotl).